The chain runs to 66 residues: Cold shock-like protein CspLB (66 aa).

Positions 4 to 63 (GTVKWFNSEKGFGFIEVEGGDDVFVHFSAIEGEGFKTLDEGQSVEFEIVEGQRGPQAEKV) constitute a CSD domain.

As to quaternary structure, homodimer.

Its subcellular location is the cytoplasm. The chain is Cold shock-like protein CspLB (cspLB) from Listeria monocytogenes serovar 1/2a (strain ATCC BAA-679 / EGD-e).